A 316-amino-acid polypeptide reads, in one-letter code: Ribose-phosphate pyrophosphokinase (316 aa).

ATP-binding positions include 42–44 (DGE) and 101–102 (RQ). Mg(2+)-binding residues include histidine 135 and aspartate 174. Lysine 197 is a catalytic residue. Residues arginine 199, aspartate 223, and 227-231 (DTAGT) each bind D-ribose 5-phosphate.

This sequence belongs to the ribose-phosphate pyrophosphokinase family. Class I subfamily. As to quaternary structure, homohexamer. Mg(2+) is required as a cofactor.

It is found in the cytoplasm. The catalysed reaction is D-ribose 5-phosphate + ATP = 5-phospho-alpha-D-ribose 1-diphosphate + AMP + H(+). The protein operates within metabolic intermediate biosynthesis; 5-phospho-alpha-D-ribose 1-diphosphate biosynthesis; 5-phospho-alpha-D-ribose 1-diphosphate from D-ribose 5-phosphate (route I): step 1/1. Involved in the biosynthesis of the central metabolite phospho-alpha-D-ribosyl-1-pyrophosphate (PRPP) via the transfer of pyrophosphoryl group from ATP to 1-hydroxyl of ribose-5-phosphate (Rib-5-P). In Halalkalibacterium halodurans (strain ATCC BAA-125 / DSM 18197 / FERM 7344 / JCM 9153 / C-125) (Bacillus halodurans), this protein is Ribose-phosphate pyrophosphokinase.